The primary structure comprises 96 residues: Large ribosomal subunit protein bL27 (96 aa).

Positions 1–9 are excised as a propeptide; it reads MLNMNLQLL.

Belongs to the bacterial ribosomal protein bL27 family. The N-terminus is cleaved by ribosomal processing cysteine protease Prp.

This Clostridioides difficile (strain 630) (Peptoclostridium difficile) protein is Large ribosomal subunit protein bL27.